The primary structure comprises 144 residues: Oleosin H2 (144 aa).

Residue Ala-2 is modified to N-acetylalanine. The next 3 helical transmembrane spans lie at 28-48, 53-73, and 75-95; these read VLAV…AGLI, IIGL…LVPA, and LTIA…ITAL. The short motif at 61–72 is the Proline-knot element; the sequence is PLFVIFSPILVP. The disordered stretch occupies residues 124–144; it reads QETVGQKTREAGQRSQDVIRP.

The protein belongs to the oleosin family. Expressed in seeds (at protein level).

Its subcellular location is the lipid droplet. The protein localises to the membrane. In terms of biological role, may have a structural role to stabilize the lipid body during desiccation of the seed by preventing coalescence of the oil. Probably interacts with both lipid and phospholipid moieties of lipid bodies. May also provide recognition signals for specific lipase anchorage in lipolysis during seedling growth. The protein is Oleosin H2 of Sesamum indicum (Oriental sesame).